The following is a 249-amino-acid chain: V-type proton ATPase subunit D 2 (249 aa).

The protein belongs to the V-ATPase D subunit family. In terms of assembly, V-ATPase is a heteromultimeric enzyme made up of two complexes: the ATP-hydrolytic V1 complex and the proton translocation V0 complex. The V1 complex consists of three catalytic AB heterodimers that form a heterohexamer, three peripheral stalks each consisting of EG heterodimers, one central rotor including subunits D and F, and the regulatory subunits C and H. The proton translocation complex V0 consists of the proton transport subunit a, a ring of proteolipid subunits c9c'', rotary subunit d, subunits e and f, and the accessory subunits VhaAC45 and ATP6AP2.

In terms of biological role, subunit of the V1 complex of vacuolar(H+)-ATPase (V-ATPase), a multisubunit enzyme composed of a peripheral complex (V1) that hydrolyzes ATP and a membrane integral complex (V0) that translocates protons. V-ATPase is responsible for acidifying and maintaining the pH of intracellular compartments and in some cell types, is targeted to the plasma membrane, where it is responsible for acidifying the extracellular environment. This is V-type proton ATPase subunit D 2 (Vha36-3) from Drosophila melanogaster (Fruit fly).